We begin with the raw amino-acid sequence, 429 residues long: Histidine--tRNA ligase (429 aa).

Belongs to the class-II aminoacyl-tRNA synthetase family. As to quaternary structure, homodimer.

Its subcellular location is the cytoplasm. The catalysed reaction is tRNA(His) + L-histidine + ATP = L-histidyl-tRNA(His) + AMP + diphosphate + H(+). The polypeptide is Histidine--tRNA ligase (Pseudomonas fluorescens (strain Pf0-1)).